We begin with the raw amino-acid sequence, 161 residues long: Protein-export protein SecB (161 aa).

Belongs to the SecB family. Homotetramer, a dimer of dimers. One homotetramer interacts with 1 SecA dimer.

The protein localises to the cytoplasm. In terms of biological role, one of the proteins required for the normal export of preproteins out of the cell cytoplasm. It is a molecular chaperone that binds to a subset of precursor proteins, maintaining them in a translocation-competent state. It also specifically binds to its receptor SecA. In Bradyrhizobium diazoefficiens (strain JCM 10833 / BCRC 13528 / IAM 13628 / NBRC 14792 / USDA 110), this protein is Protein-export protein SecB.